Reading from the N-terminus, the 451-residue chain is Tubulin alpha-1A chain (451 aa).

Positions Met-1–Cys-4 match the MREC motif motif. Positions 11, 71, 140, 144, 145, 179, 206, and 228 each coordinate GTP. Glu-71 is a binding site for Mg(2+). The active site involves Glu-254. The disordered stretch occupies residues Tyr-432–Tyr-451. At Glu-445 the chain carries 5-glutamyl polyglutamate.

The protein belongs to the tubulin family. In terms of assembly, dimer of alpha and beta chains. A typical microtubule is a hollow water-filled tube with an outer diameter of 25 nm and an inner diameter of 15 nM. Alpha-beta heterodimers associate head-to-tail to form protofilaments running lengthwise along the microtubule wall with the beta-tubulin subunit facing the microtubule plus end conferring a structural polarity. Microtubules usually have 13 protofilaments but different protofilament numbers can be found in some organisms and specialized cells. It depends on Mg(2+) as a cofactor. Post-translationally, some glutamate residues at the C-terminus are polyglycylated, resulting in polyglycine chains on the gamma-carboxyl group. Glycylation is mainly limited to tubulin incorporated into axonemes (cilia and flagella) whereas glutamylation is prevalent in neuronal cells, centrioles, axonemes, and the mitotic spindle. Both modifications can coexist on the same protein on adjacent residues, and lowering polyglycylation levels increases polyglutamylation, and reciprocally. The precise function of polyglycylation is still unclear. In terms of processing, some glutamate residues at the C-terminus are polyglutamylated, resulting in polyglutamate chains on the gamma-carboxyl group. Polyglutamylation plays a key role in microtubule severing by spastin (SPAST). SPAST preferentially recognizes and acts on microtubules decorated with short polyglutamate tails: severing activity by SPAST increases as the number of glutamates per tubulin rises from one to eight, but decreases beyond this glutamylation threshold. Undergoes a tyrosination/detyrosination cycle, the cyclic removal and re-addition of a C-terminal tyrosine residue by the enzymes tubulin tyrosine carboxypeptidase (MATCAP1, VASH1 or VASH2) and tubulin tyrosine ligase (TTL), respectively. Post-translationally, tyrosination promotes microtubule interaction with CAP-Gly microtubule plus-end tracking proteins. Tyrosinated tubulins regulate the initiation of dynein-driven motility. In terms of processing, detyrosination is involved in metaphase plate congression by guiding chromosomes during mitosis. Detyrosination increases microtubules-dependent mechanotransduction in dystrophic cardiac and skeletal muscle. In cardiomyocytes, detyrosinated microtubules are required to resist to contractile compression during contraction.

Its subcellular location is the cytoplasm. It localises to the cytoskeleton. The enzyme catalyses GTP + H2O = GDP + phosphate + H(+). Tubulin is the major constituent of microtubules, a cylinder consisting of laterally associated linear protofilaments composed of alpha- and beta-tubulin heterodimers. Microtubules grow by the addition of GTP-tubulin dimers to the microtubule end, where a stabilizing cap forms. Below the cap, tubulin dimers are in GDP-bound state, owing to GTPase activity of alpha-tubulin. The sequence is that of Tubulin alpha-1A chain (TUBA1A) from Gallus gallus (Chicken).